We begin with the raw amino-acid sequence, 97 residues long: HssA/B-like protein 32 (97 aa).

2 disordered regions span residues 1 to 23 (MTLF…SLAS) and 62 to 97 (AKSS…GSCS). Gly residues predominate over residues 62–74 (AKSSGGSCGGKGG). The segment covering 75–88 (SHNHGHGHGPHGHG) has biased composition (basic residues).

Belongs to the hssA/B family.

The protein is HssA/B-like protein 32 (hssl32) of Dictyostelium discoideum (Social amoeba).